The primary structure comprises 231 residues: UPF0173 metal-dependent hydrolase AF_1265 (231 aa).

This sequence belongs to the UPF0173 family.

The sequence is that of UPF0173 metal-dependent hydrolase AF_1265 from Archaeoglobus fulgidus (strain ATCC 49558 / DSM 4304 / JCM 9628 / NBRC 100126 / VC-16).